A 157-amino-acid polypeptide reads, in one-letter code: Arginine repressor (157 aa).

The protein belongs to the ArgR family.

Its subcellular location is the cytoplasm. It participates in amino-acid biosynthesis; L-arginine biosynthesis [regulation]. In terms of biological role, regulates arginine biosynthesis genes. This chain is Arginine repressor, found in Bacteroides fragilis (strain YCH46).